The chain runs to 255 residues: Small ribosomal subunit protein uS3c (255 aa).

The region spanning 51 to 124 (IRESSNTSYG…NKNQNKNTGQ (74 aa)) is the KH type-2 domain. The tract at residues 96–121 (EKNRDKNKSNKNSALDQSVNKNQNKN) is disordered. The span at 108 to 121 (SALDQSVNKNQNKN) shows a compositional bias: polar residues.

The protein belongs to the universal ribosomal protein uS3 family. In terms of assembly, part of the 30S ribosomal subunit.

The protein resides in the plastid. It is found in the chloroplast. This Chaetosphaeridium globosum (Charophycean green alga) protein is Small ribosomal subunit protein uS3c (rps3).